Reading from the N-terminus, the 380-residue chain is Guanine nucleotide-binding protein subunit beta (380 aa).

7 WD repeats span residues 64-94 (GHSG…IVWN), 106-136 (LHCP…SIFN), 155-186 (GHKG…VLWD), 203-234 (GHTA…RLWD), 247-277 (GHED…RLFD), 296-326 (NELP…YVWD), and 342-372 (SHDG…KIWA).

It belongs to the WD repeat G protein beta family. G proteins are composed of 3 units, alpha, beta and gamma. As to expression, present in the root, leaf and tassel.

Its function is as follows. Guanine nucleotide-binding proteins (G proteins) are involved as a modulator or transducer in various transmembrane signaling systems. The beta and gamma chains are required for the GTPase activity, for replacement of GDP by GTP, and for G protein-effector interaction. This is Guanine nucleotide-binding protein subunit beta (GB1) from Zea mays (Maize).